A 222-amino-acid chain; its full sequence is Phosphoglycolate phosphatase (222 aa).

The active-site Nucleophile is the D8. 2 residues coordinate Mg(2+): D8 and D10. K150 contacts substrate. 2 residues coordinate Mg(2+): D173 and D177.

It belongs to the archaeal SPP-like hydrolase family. Mg(2+) is required as a cofactor.

It catalyses the reaction 2-phosphoglycolate + H2O = glycolate + phosphate. Catalyzes the dephosphorylation of 2-phosphoglycolate. This is Phosphoglycolate phosphatase from Metallosphaera sedula (strain ATCC 51363 / DSM 5348 / JCM 9185 / NBRC 15509 / TH2).